Reading from the N-terminus, the 407-residue chain is Peptidase T (407 aa).

His-82 provides a ligand contact to Zn(2+). Residue Asp-84 is part of the active site. Asp-143 contributes to the Zn(2+) binding site. The Proton acceptor role is filled by Glu-177. Positions 178, 200, and 382 each coordinate Zn(2+).

Belongs to the peptidase M20B family. Zn(2+) serves as cofactor.

The protein resides in the cytoplasm. The enzyme catalyses Release of the N-terminal residue from a tripeptide.. Functionally, cleaves the N-terminal amino acid of tripeptides. This is Peptidase T from Streptococcus pyogenes serotype M6 (strain ATCC BAA-946 / MGAS10394).